We begin with the raw amino-acid sequence, 418 residues long: MSVFFYLFVLVFGLQATIHCAPHNSSEGKVTTCHLPQQNATLYKMPSINADFAFSLYRRLSVENPDLNIFFSPVSISVALAMLSFGSGSSTQTQILEVLGFNLTDTPVTELQQGFQHLICSLNFPKNELELQMGNAVFIGQQLKPLAKFLDDVKTLYETEVFSTDFSNVSAAQHKINSYVEKQTKGKIVGLIQGLKLNIIMILVNYIHFRAQWANPFRVSKTEESSNFSVDKSTTVQVPMMHQLEQYYHYVDMELNCTVLQMDYSENALALFVLPKEGHMEWVEAAMSSKTLKKWNYLLQKGWVELFVPKFSISATYDLGSTLQKMGMRDAFAESADFPGITEDSGLKLSYAFHKAVLHIGEEGTKEGASPEVGSLDQQEVPPLHPVIRLDRAFLLMILEKRTRSVLFLGKLVNPTKQ.

Positions 1-20 (MSVFFYLFVLVFGLQATIHC) are cleaved as a signal peptide. N-linked (GlcNAc...) asparagine glycans are attached at residues Asn-24, Asn-39, Asn-102, Asn-168, Asn-227, and Asn-256. Residues Asn-296 and Lys-401 each contribute to the thyroxine site.

This sequence belongs to the serpin family.

The protein resides in the secreted. Functionally, major thyroid hormone transport protein in serum. The sequence is that of Thyroxine-binding globulin (Serpina7) from Mus musculus (Mouse).